Consider the following 1001-residue polypeptide: E3 ubiquitin-protein ligase BRE1B (1001 aa).

The segment at 1-31 is disordered; the sequence is MSGLGNKRAAGDGGSGPPEKKLSREEKTTTT. Over residues 18–28 the composition is skewed to basic and acidic residues; the sequence is PEKKLSREEKT. At K20 the chain carries N6-acetyllysine. Phosphoserine is present on S42. The stretch at 45–91 forms a coiled coil; it reads EEIDLKVLQFKNKKLAERLEQRQACEDELRERIEKLEKRQATDDATL. The disordered stretch occupies residues 116–149; that stretch reads GELSSAPEAPGTQEGPTCDGTPLPEPGTSELREP. 2 coiled-coil regions span residues 228–377 and 437–523; these read ARTR…LRSL and LQKK…AQTS. An N6-acetyllysine mark is found at K355 and K517. The disordered stretch occupies residues 516–646; the sequence is GKLRAQTSGS…EKAKVEEAKR (131 aa). A compositionally biased stretch (polar residues) spans 520 to 531; that stretch reads AQTSGSTHSTPN. A Phosphoserine modification is found at S528. Glycyl lysine isopeptide (Lys-Gly) (interchain with G-Cter in SUMO2) cross-links involve residues K578 and K579. S585 carries the post-translational modification Phosphoserine. Basic and acidic residues-rich tracts occupy residues 602-619 and 633-646; these read RGRE…EREG and RADR…EAKR. Residues 627–946 are a coiled coil; the sequence is VASALSRADR…EEIKEYKARL (320 aa). Residues 948 to 987 form an RING-type zinc finger; that stretch reads CPCCNTRKKDAVLTKCFHVFCFECVRGRYEARQRKCPKCN.

It belongs to the BRE1 family. Component of the RNF20/40 complex (also known as BRE1 complex) probably composed of 2 copies of RNF20/BRE1A and 2 copies of RNF40/BRE1B. Interacts with UBE2E1/UBCH6. Interacts with RB1 and WAC.

It is found in the nucleus. The catalysed reaction is S-ubiquitinyl-[E2 ubiquitin-conjugating enzyme]-L-cysteine + [acceptor protein]-L-lysine = [E2 ubiquitin-conjugating enzyme]-L-cysteine + N(6)-ubiquitinyl-[acceptor protein]-L-lysine.. It functions in the pathway protein modification; protein ubiquitination. Its function is as follows. Component of the RNF20/40 E3 ubiquitin-protein ligase complex that mediates monoubiquitination of 'Lys-120' of histone H2B (H2BK120ub1). H2BK120ub1 gives a specific tag for epigenetic transcriptional activation and is also prerequisite for histone H3 'Lys-4' and 'Lys-79' methylation (H3K4me and H3K79me, respectively). It thereby plays a central role in histone code and gene regulation. The RNF20/40 complex forms a H2B ubiquitin ligase complex in cooperation with the E2 enzyme UBE2A or UBE2B; reports about the cooperation with UBE2E1/UBCH are contradictory. Required for transcriptional activation of Hox genes. This Macaca fascicularis (Crab-eating macaque) protein is E3 ubiquitin-protein ligase BRE1B (RNF40).